We begin with the raw amino-acid sequence, 587 residues long: MAQDVKTQLTALLQQALASVAPAATDTPIHLERPRDPTHGDFATNLAMQLAKALKKNPREIANQLLAELPPSRLVTKAEVAGAGFINFTLDAGFKTDVVKAVLAEGDNFGRSNQGGWQKVQVEFVSANPTGPLHVGHGRGAAYGASLSSLLTFAGWDVTREYYVNDAGRQMDILGLSTWLRYLEQHGVDVPFLPNAYQGDYVRDMAKQMTVAHGDKFVRPAADVLAGTPGLPEAERADDEAKRQRDLHLDALIANAKVLLGPDWTYVHQHALSEQLADGRDDLEEFGVHFDVWFSEQALFDTGLVARCVDLLEKNGHLYVQNGARWFKSTTFGDEKDRVVQRENGLYTYFASDIAYHLNKFERGFDKVINIWGADHHGYIARVNGAITALGLDASKLQVALVQFAVLYRNGQKASMSTRSGEFVTLRELRGEVGNDACRFFYALRKSDQHLDFDLDLAKSQTNENPVYYIQYAHARVCSVINQWGGDLATLADANLALLDNPRELAIASKLAEFRDVIDGAARELAPHLIAFYLKDLAGEFHGWYNAERMLVDDAALRDARVALAAAVRQTIRNGMTILGVSCPDSM.

The 'HIGH' region motif lies at 127–137; sequence ANPTGPLHVGH.

It belongs to the class-I aminoacyl-tRNA synthetase family. As to quaternary structure, monomer.

The protein localises to the cytoplasm. It carries out the reaction tRNA(Arg) + L-arginine + ATP = L-arginyl-tRNA(Arg) + AMP + diphosphate. This chain is Arginine--tRNA ligase, found in Dechloromonas aromatica (strain RCB).